Reading from the N-terminus, the 475-residue chain is Sensor histidine kinase GlrK (475 aa).

Over 1 to 13 (MKRWPVFPRSLRQ) the chain is Cytoplasmic. Residues 14-34 (LVMLAFLLILLPLLVLAWQAW) traverse the membrane as a helical segment. The Periplasmic segment spans residues 35 to 173 (QSLNALSDQA…LQREIAERGQ (139 aa)). Residues 174–194 (YFGWQSLVLFLVSLVMVLLFT) traverse the membrane as a helical segment. Residues 195–475 (RMIIGPVKNI…IELPSSKNTK (281 aa)) lie on the Cytoplasmic side of the membrane. One can recognise a Histidine kinase domain in the interval 256-472 (HLSHELKTPL…CFRIELPSSK (217 aa)). His-259 bears the Phosphohistidine; by autocatalysis mark.

Post-translationally, autophosphorylated.

The protein localises to the cell inner membrane. The enzyme catalyses ATP + protein L-histidine = ADP + protein N-phospho-L-histidine.. In terms of biological role, member of the two-component regulatory system GlrR/GlrK that up-regulates transcription of the glmY sRNA when cells enter the stationary growth phase. Activates GlrR by phosphorylation. The polypeptide is Sensor histidine kinase GlrK (glrK) (Escherichia coli (strain K12)).